Here is a 115-residue protein sequence, read N- to C-terminus: Nitrogenase iron-iron protein delta chain (115 aa).

In terms of assembly, hexamer of two alpha, two beta, and two delta chains. It depends on iron-sulfur cluster as a cofactor.

It catalyses the reaction N2 + 8 reduced [2Fe-2S]-[ferredoxin] + 16 ATP + 16 H2O = H2 + 8 oxidized [2Fe-2S]-[ferredoxin] + 2 NH4(+) + 16 ADP + 16 phosphate + 6 H(+). Functionally, the key enzymatic reactions in nitrogen fixation are catalyzed by the nitrogenase complex, which has 2 components: the iron protein (component 2) and a component 1 which is either a molybdenum-iron protein, a vanadium-iron, or an iron-iron protein. The protein is Nitrogenase iron-iron protein delta chain (anfG) of Rhodobacter capsulatus (Rhodopseudomonas capsulata).